The primary structure comprises 306 residues: Cytochrome P450 monooxygenase aclO (306 aa).

C237 lines the heme pocket.

Belongs to the cytochrome P450 family. Requires heme as cofactor.

It participates in mycotoxin biosynthesis. Its function is as follows. Cytochrome P450 monooxygenase; part of the gene cluster that mediates the biosynthesis of aspirochlorine (or antibiotic A30641), an unusual halogenated spiro compound with distinctive antifungal properties due to selective inhibition of protein biosynthesis, and which is also active against bacteria, viruses, and murine tumor cells. The non-ribosomal peptide synthetase (NRPS) aclP is responsible the formation of the diketopiperazine (DKP) core from the condensation of 2 phenylalanine residues. One Phe residue is tailored into chlorotyrosine by hydroxylation and chlorination, whereas the second Phe undergoes an unprecedented C-C bond cleavage to be converted into glycine. After formation of the DKP, sulfur is incorporated into the DKP by conjugation with glutathione by aclG, followed by its stepwise degradation to the thiol by aclI, aclJ and aclK, and the dithiol oxidation by aclT. In addition, oxygenases (aclB, aclC, aclL and aclO) and O-methyltransferases (aclM and aclU) act as tailoring enzymes to produce the intermediate dechloroaspirochlorine. Ultimately, chlorination of dechloroaspirochlorine by the halogenase aclH is the last step in the aspirochlorine pathway. This Aspergillus oryzae (strain ATCC 42149 / RIB 40) (Yellow koji mold) protein is Cytochrome P450 monooxygenase aclO.